Consider the following 235-residue polypeptide: Regulator of G-protein signaling 18 (235 aa).

Ser-49 carries the post-translational modification Phosphoserine. One can recognise an RGS domain in the interval Ser-86–Ile-202. Phosphoserine is present on residues Ser-216 and Ser-218.

Expressed in bone marrow, spleen, fetal liver and lung. At very low levels expressed in heart.

It localises to the cytoplasm. In terms of biological role, inhibits signal transduction by increasing the GTPase activity of G protein alpha subunits thereby driving them into their inactive GDP-bound form. Binds to G(i) alpha-1, G(i) alpha-2, G(i) alpha-3 and G(q) alpha. The polypeptide is Regulator of G-protein signaling 18 (Rgs18) (Mus musculus (Mouse)).